A 218-amino-acid chain; its full sequence is Heart- and neural crest derivatives-expressed protein 1 (218 aa).

3 disordered regions span residues 1 to 23 (MNLV…HPAH), 56 to 112 (APDF…RTES), and 172 to 203 (ADGG…RIKG). A compositionally biased stretch (basic residues) spans 8-21 (AHHHHHHHHHHPHP). Positions 68 to 92 (AAAAAASYGPDARPGQSPGRLEALG) are enriched in low complexity. The segment covering 95–107 (LGRRKGSGPKKER) has biased composition (basic residues). In terms of domain architecture, bHLH spans 97–149 (RRKGSGPKKERRRTESINSAFAELRECIPNVPADTKLSKIKTLRLATSYIAYL). Threonine 110 carries the phosphothreonine; by PLK4 modification. Residue serine 112 is modified to Phosphoserine; by PLK4.

As to quaternary structure, efficient DNA binding requires dimerization with another bHLH protein. Forms homodimers and heterodimers with TCF3 gene products E12 and E47, HAND2 and HEY1, HEY2 and HEYL (hairy-related transcription factors). Interacts with MDFIC. Interacts with SOX15; the interaction enhances HAND1-induced differentiation of trophoblast giant cells. Post-translationally, phosphorylation by PLK4 disrupts the interaction with MDFIC and leads to translocation into the nucleoplasm, allowing dimerization and transcription factor activity.

Its subcellular location is the nucleus. The protein localises to the nucleoplasm. The protein resides in the nucleolus. In terms of biological role, transcription factor that plays an essential role in both trophoblast giant cell differentiation and in cardiac morphogenesis. Binds the DNA sequence 5'-NRTCTG-3' (non-canonical E-box). Acts as a transcriptional repressor of SOX15. In the adult, could be required for ongoing expression of cardiac-specific genes. This chain is Heart- and neural crest derivatives-expressed protein 1 (HAND1), found in Bos taurus (Bovine).